Reading from the N-terminus, the 353-residue chain is Anthranilate phosphoribosyltransferase (353 aa).

Residues Gly-79, 82-83, Thr-87, 89-92, 107-115, and Ser-119 contribute to the 5-phospho-alpha-D-ribose 1-diphosphate site; these read GD, NIST, and KHGNHSFTS. Gly-79 contributes to the anthranilate binding site. Residue Ser-91 coordinates Mg(2+). Asn-110 provides a ligand contact to anthranilate. Arg-165 contributes to the anthranilate binding site. Positions 223 and 224 each coordinate Mg(2+).

Belongs to the anthranilate phosphoribosyltransferase family. As to quaternary structure, homodimer. Requires Mg(2+) as cofactor.

The enzyme catalyses N-(5-phospho-beta-D-ribosyl)anthranilate + diphosphate = 5-phospho-alpha-D-ribose 1-diphosphate + anthranilate. Its pathway is amino-acid biosynthesis; L-tryptophan biosynthesis; L-tryptophan from chorismate: step 2/5. Functionally, catalyzes the transfer of the phosphoribosyl group of 5-phosphorylribose-1-pyrophosphate (PRPP) to anthranilate to yield N-(5'-phosphoribosyl)-anthranilate (PRA). This chain is Anthranilate phosphoribosyltransferase, found in Methanococcoides burtonii (strain DSM 6242 / NBRC 107633 / OCM 468 / ACE-M).